The sequence spans 295 residues: Small ribosomal subunit biogenesis GTPase RsgA (295 aa).

Positions K68–L228 constitute a CP-type G domain. GTP contacts are provided by residues N117–D120 and G170–S178. Residues C250, C255, H257, and C263 each contribute to the Zn(2+) site.

It belongs to the TRAFAC class YlqF/YawG GTPase family. RsgA subfamily. In terms of assembly, monomer. Associates with 30S ribosomal subunit, binds 16S rRNA. Zn(2+) is required as a cofactor.

Its subcellular location is the cytoplasm. Functionally, one of several proteins that assist in the late maturation steps of the functional core of the 30S ribosomal subunit. Helps release RbfA from mature subunits. May play a role in the assembly of ribosomal proteins into the subunit. Circularly permuted GTPase that catalyzes slow GTP hydrolysis, GTPase activity is stimulated by the 30S ribosomal subunit. In Thermotoga maritima (strain ATCC 43589 / DSM 3109 / JCM 10099 / NBRC 100826 / MSB8), this protein is Small ribosomal subunit biogenesis GTPase RsgA.